A 341-amino-acid chain; its full sequence is L-threonine 3-dehydrogenase (341 aa).

Cys-38 lines the Zn(2+) pocket. Active-site charge relay system residues include Thr-40 and His-43. The Zn(2+) site is built by His-63, Glu-64, Cys-93, Cys-96, Cys-99, and Cys-107. NAD(+)-binding positions include Ile-175, Asp-195, Arg-200, 262–264, and 286–287; these read LGI and IY.

The protein belongs to the zinc-containing alcohol dehydrogenase family. As to quaternary structure, homotetramer. Requires Zn(2+) as cofactor.

It localises to the cytoplasm. The catalysed reaction is L-threonine + NAD(+) = (2S)-2-amino-3-oxobutanoate + NADH + H(+). Its pathway is amino-acid degradation; L-threonine degradation via oxydo-reductase pathway; glycine from L-threonine: step 1/2. Its function is as follows. Catalyzes the NAD(+)-dependent oxidation of L-threonine to 2-amino-3-ketobutyrate. This Edwardsiella ictaluri (strain 93-146) protein is L-threonine 3-dehydrogenase.